The primary structure comprises 176 residues: Ferritin, middle subunit (176 aa).

A Ferritin-like diiron domain is found at 7 to 156; it reads QNYHRDCEAA…DFITNLSRMD (150 aa). The Fe cation site is built by Glu24, Glu59, His62, Glu104, and Gln138.

The protein belongs to the ferritin family. As to quaternary structure, in liver, forms a heteromer consisting of middle and heavy subunits. In spleen, forms a homomer. The functional molecule forms a roughly spherical shell with a diameter of 12 nm and contains a central cavity into which the insoluble mineral iron core is deposited. As to expression, liver and spleen (at protein level).

The catalysed reaction is 4 Fe(2+) + O2 + 4 H(+) = 4 Fe(3+) + 2 H2O. Its function is as follows. Stores iron in a soluble, non-toxic, readily available form. Important for iron homeostasis. Has ferroxidase activity. Iron is taken up in the ferrous form and deposited as ferric hydroxides after oxidation. This chain is Ferritin, middle subunit, found in Trematomus newnesi (Dusky notothen).